A 303-amino-acid polypeptide reads, in one-letter code: CDAN1-interacting nuclease 1 (303 aa).

The protein resides in the nucleus. The protein localises to the cytoplasm. Functionally, may play a role in erythroid cell differentiation. The chain is CDAN1-interacting nuclease 1 from Xenopus laevis (African clawed frog).